Reading from the N-terminus, the 168-residue chain is ATP synthase subunit b (168 aa).

A helical membrane pass occupies residues 9 to 29 (SIPFGTIAYTLFIFLLLLVML).

The protein belongs to the ATPase B chain family. As to quaternary structure, F-type ATPases have 2 components, F(1) - the catalytic core - and F(0) - the membrane proton channel. F(1) has five subunits: alpha(3), beta(3), gamma(1), delta(1), epsilon(1). F(0) has three main subunits: a(1), b(2) and c(10-14). The alpha and beta chains form an alternating ring which encloses part of the gamma chain. F(1) is attached to F(0) by a central stalk formed by the gamma and epsilon chains, while a peripheral stalk is formed by the delta and b chains.

The protein resides in the cell membrane. In terms of biological role, f(1)F(0) ATP synthase produces ATP from ADP in the presence of a proton or sodium gradient. F-type ATPases consist of two structural domains, F(1) containing the extramembraneous catalytic core and F(0) containing the membrane proton channel, linked together by a central stalk and a peripheral stalk. During catalysis, ATP synthesis in the catalytic domain of F(1) is coupled via a rotary mechanism of the central stalk subunits to proton translocation. Its function is as follows. Component of the F(0) channel, it forms part of the peripheral stalk, linking F(1) to F(0). In Bacillus mycoides (strain KBAB4) (Bacillus weihenstephanensis), this protein is ATP synthase subunit b.